The primary structure comprises 101 residues: Small ribosomal subunit protein bS18c (101 aa).

A disordered region spans residues 82 to 101; that stretch reads KQFERAESTPRTPGPRTRNK.

Belongs to the bacterial ribosomal protein bS18 family. Part of the 30S ribosomal subunit.

The protein localises to the plastid. Its subcellular location is the chloroplast. The chain is Small ribosomal subunit protein bS18c from Platanus occidentalis (Sycamore).